We begin with the raw amino-acid sequence, 277 residues long: tRNA pseudouridine synthase A (277 aa).

Asp51 acts as the Nucleophile in catalysis. Tyr109 provides a ligand contact to substrate.

Belongs to the tRNA pseudouridine synthase TruA family. Homodimer.

It carries out the reaction uridine(38/39/40) in tRNA = pseudouridine(38/39/40) in tRNA. Formation of pseudouridine at positions 38, 39 and 40 in the anticodon stem and loop of transfer RNAs. The polypeptide is tRNA pseudouridine synthase A (Nitrosomonas eutropha (strain DSM 101675 / C91 / Nm57)).